Consider the following 182-residue polypeptide: Vacuolar protein sorting-associated protein 29 (182 aa).

An N6-acetyllysine modification is found at Lys50.

The protein belongs to the VPS29 family. In terms of assembly, component of the commander complex consisting of the CCC subcomplex and the retriever subcomplex. Component of the heterotrimeric retriever complex formed by VPS26C, VPS29 and VPS35L; within the complex interacts with VPS35L. Component of the heterotrimeric retromer cargo-selective complex (CSC), also described as vacuolar protein sorting subcomplex (VPS), formed by VPS26 (VPS26A or VPS26B), VPS29 and VPS35. The CSC has a highly elongated structure with VPS26 and VPS29 binding independently at opposite distal ends of VPS35 as central platform. The CSC is believed to associate with variable sorting nexins to form functionally distinct retromer complex variants. The originally described retromer complex (also called SNX-BAR retromer) is a pentamer containing the CSC and a heterodimeric membrane-deforming subcomplex formed between SNX1 or SNX2 and SNX5 or SNX6 (also called SNX-BAR subcomplex); the respective CSC and SNX-BAR subcomplexes associate with low affinity. The CSC associates with SNX3 to form a SNX3-retromer complex. The CSC associates with SNX27, the WASH complex and the SNX-BAR subcomplex to form the SNX27-retromer complex. Interacts with VPS26A, VPS35, SNX1, SNX2, SNX3, SNX27, WASHC5. Interacts with TBC1D5; this interaction is blocked by VPS35L in the retriever complex. Interacts with SNX17; the interaction is indirect; SNX17 (via its C-terminus) interacts with the retriever complex (via VPS26C and VPS35L). Interacts with VPS26B and ANKRD27.

It localises to the cytoplasm. The protein localises to the membrane. The protein resides in the endosome membrane. It is found in the early endosome. Its subcellular location is the late endosome. Functionally, component of the commander complex that is essential for endosomal recycling of transmembrane cargos; the commander complex is composed of the CCC subcomplex and the retriever subcomplex. Component of the retriever complex, which is a heterotrimeric complex related to retromer cargo-selective complex (CSC) and essential for retromer-independent retrieval and recycling of numerous cargos such as integrin alpha-5/beta-1 (ITGA5:ITGB1). Component of the retromer cargo-selective complex (CSC). The CSC is believed to be the core functional component of retromer or respective retromer complex variants acting to prevent missorting of selected transmembrane cargo proteins into the lysosomal degradation pathway. The recruitment of the CSC to the endosomal membrane involves RAB7A and SNX3. The SNX-BAR retromer mediates retrograde transport of cargo proteins from endosomes to the trans-Golgi network (TGN) and is involved in endosome-to-plasma membrane transport for cargo protein recycling. The SNX3-retromer mediates the retrograde endosome-to-TGN transport of WLS distinct from the SNX-BAR retromer pathway. The SNX27-retromer is believed to be involved in endosome-to-plasma membrane trafficking and recycling of a broad spectrum of cargo proteins. The CSC seems to act as recruitment hub for other proteins, such as the WASH complex and TBC1D5. Required to regulate transcytosis of the polymeric immunoglobulin receptor (pIgR-pIgA). In the endosomes, retriever complex drives the retrieval and recycling of NxxY-motif-containing cargo proteins by coupling to SNX17, a cargo essential for the homeostatic maintenance of numerous cell surface proteins associated with processes that include cell migration, cell adhesion, nutrient supply and cell signaling. The recruitment of the retriever complex to the endosomal membrane involves CCC and WASH complexes. Involved in GLUT1 endosome-to-plasma membrane trafficking; the function is dependent of association with ANKRD27. This chain is Vacuolar protein sorting-associated protein 29, found in Rattus norvegicus (Rat).